The sequence spans 251 residues: Ubiquinone/menaquinone biosynthesis C-methyltransferase UbiE (251 aa).

Residues Thr74, Asp95, 123–124, and Ser140 each bind S-adenosyl-L-methionine; that span reads NA.

Belongs to the class I-like SAM-binding methyltransferase superfamily. MenG/UbiE family.

It carries out the reaction a 2-demethylmenaquinol + S-adenosyl-L-methionine = a menaquinol + S-adenosyl-L-homocysteine + H(+). It catalyses the reaction a 2-methoxy-6-(all-trans-polyprenyl)benzene-1,4-diol + S-adenosyl-L-methionine = a 5-methoxy-2-methyl-3-(all-trans-polyprenyl)benzene-1,4-diol + S-adenosyl-L-homocysteine + H(+). It participates in quinol/quinone metabolism; menaquinone biosynthesis; menaquinol from 1,4-dihydroxy-2-naphthoate: step 2/2. The protein operates within cofactor biosynthesis; ubiquinone biosynthesis. Functionally, methyltransferase required for the conversion of demethylmenaquinol (DMKH2) to menaquinol (MKH2) and the conversion of 2-polyprenyl-6-methoxy-1,4-benzoquinol (DDMQH2) to 2-polyprenyl-3-methyl-6-methoxy-1,4-benzoquinol (DMQH2). The protein is Ubiquinone/menaquinone biosynthesis C-methyltransferase UbiE of Proteus mirabilis (strain HI4320).